We begin with the raw amino-acid sequence, 288 residues long: Dysbindin protein homolog (288 aa).

Positions 147-239 (AQLQNSSQVL…QRERQAVFDD (93 aa)) form a coiled coil.

Belongs to the dysbindin family. Component of the biogenesis of lysosome-related organelles complex-1 (BLOC-1) composed of Blos1, Blos2, Blos3, Blos4, Dysb, Muted, Pldn and Snapin. Interacts with Pldn and Snapin.

Its function is as follows. Component of the biogenesis of lysosome-related organelles complex-1 (BLOC-1) involved in pigment granule biogenesis and membrane trafficking in synapses. In response to high synaptic activity at neuromuscular junctions, stabilizes Pldn protein levels and, together with Pldn, plays a role in promoting efficient synaptic vesicle recycling and re-formation through early endosomes. The sequence is that of Dysbindin protein homolog from Drosophila melanogaster (Fruit fly).